Consider the following 371-residue polypeptide: Probable trehalose-phosphate phosphatase 1 (371 aa).

Belongs to the trehalose phosphatase family. Requires a divalent metal cation as cofactor. Expressed in roots and shoots.

The enzyme catalyses alpha,alpha-trehalose 6-phosphate + H2O = alpha,alpha-trehalose + phosphate. It functions in the pathway glycan biosynthesis; trehalose biosynthesis. Functionally, removes the phosphate from trehalose 6-phosphate to produce free trehalose. Trehalose accumulation in plant improves abiotic stress tolerance. This Oryza sativa subsp. japonica (Rice) protein is Probable trehalose-phosphate phosphatase 1 (TPP1).